Here is a 215-residue protein sequence, read N- to C-terminus: tRNA (guanine-N(7)-)-methyltransferase (215 aa).

S-adenosyl-L-methionine is bound by residues E44, E69, D96, and D118. The active site involves D118. Substrate is bound by residues K122, D154, and 192–195 (TEYE).

Belongs to the class I-like SAM-binding methyltransferase superfamily. TrmB family.

The catalysed reaction is guanosine(46) in tRNA + S-adenosyl-L-methionine = N(7)-methylguanosine(46) in tRNA + S-adenosyl-L-homocysteine. It participates in tRNA modification; N(7)-methylguanine-tRNA biosynthesis. Its function is as follows. Catalyzes the formation of N(7)-methylguanine at position 46 (m7G46) in tRNA. This Levilactobacillus brevis (strain ATCC 367 / BCRC 12310 / CIP 105137 / JCM 1170 / LMG 11437 / NCIMB 947 / NCTC 947) (Lactobacillus brevis) protein is tRNA (guanine-N(7)-)-methyltransferase.